A 340-amino-acid polypeptide reads, in one-letter code: DNA-directed RNA polymerase subunit alpha (340 aa).

The alpha N-terminal domain (alpha-NTD) stretch occupies residues 1–236; the sequence is MLSLSKNWNT…EQLQLFISFE (236 aa). Residues 251–340 form an alpha C-terminal domain (alpha-CTD) region; it reads FSPYLLKRVD…LSKRYEDSYN (90 aa).

It belongs to the RNA polymerase alpha chain family. Homodimer. The RNAP catalytic core consists of 2 alpha, 1 beta, 1 beta' and 1 omega subunit. When a sigma factor is associated with the core the holoenzyme is formed, which can initiate transcription.

It catalyses the reaction RNA(n) + a ribonucleoside 5'-triphosphate = RNA(n+1) + diphosphate. DNA-dependent RNA polymerase catalyzes the transcription of DNA into RNA using the four ribonucleoside triphosphates as substrates. The polypeptide is DNA-directed RNA polymerase subunit alpha (Rickettsia conorii (strain ATCC VR-613 / Malish 7)).